A 229-amino-acid chain; its full sequence is Heptaprenylglyceryl phosphate synthase (229 aa).

Lys12 contacts sn-glycerol 1-phosphate. The Mg(2+) site is built by Asp14 and Ser40. Sn-glycerol 1-phosphate-binding positions include 159-164 (YLEYSG), Gly189, and 209-210 (GN).

Belongs to the GGGP/HepGP synthase family. Group I subfamily. In terms of assembly, homodimer. Requires Mg(2+) as cofactor.

The catalysed reaction is sn-glycerol 1-phosphate + all-trans-heptaprenyl diphosphate = 3-heptaprenyl-sn-glycero-1-phosphate + diphosphate. Its pathway is membrane lipid metabolism; glycerophospholipid metabolism. Functionally, prenyltransferase that catalyzes in vivo the transfer of the heptaprenyl moiety of heptaprenyl pyrophosphate (HepPP; 35 carbon atoms) to the C3 hydroxyl of sn-glycerol-1-phosphate (G1P), producing heptaprenylglyceryl phosphate (HepGP). This reaction is an ether-bond-formation step in the biosynthesis of archaea-type G1P-based membrane lipids found in Bacillales. The sequence is that of Heptaprenylglyceryl phosphate synthase from Bacillus mycoides (strain KBAB4) (Bacillus weihenstephanensis).